An 817-amino-acid chain; its full sequence is MYSKNIIYFNKAFDKIEIKNLINWFLINYGNIKTTKLLDKIKKFGLIHATNAGISIGLNDLIIPPSKKNLVEISNKNLNKINKKFKNGKINLITYLIKEKRTWDNMNENLKIESIKNLKQNDLLNSLYTMTLSGARGNINQVKQLISMRGLISDSQGNLLNLPIKTNFKEGLNIVEYFISCYGARKGIIDTSLKTANAGYLTRRLIFASQNTIIRKTNCFTKYKKKIKIKYETKQEFKLLKEELIGRINVKTIKEKDNNKIIISYGQDICYTFKKILNHNINIYIRTPLNCILTTGICQMCYGWNLATGKIVELGETIGTIAAQSIGEPGTQLTMRTFHLGGIFTSKIKESILSPFTGKIWYDLNKNGKKTYNKFNEKIFLTSKEKKITIYENNINKSIYYLPPNSYIFVRPGEKVFKAQIIAETFDKQKKKENTKFNEVKKIKSNISGKKYINKKNKKFNNLYWILNANFITFNKFYHKLTDKLNFKKKSYTISKNMQDKNKKSKKNLQLKISIKNILNNMEKKKSKTNKKFIFINEILNKNKTIILNKPKKEKIINNKWKIGKFILKDEITNKNRNLYPSQIIQEKKDTSVLKKVTPYRLNDKILDKNPYIMKKNALLYKAVTKKEKNKDIIQGLVEIEKLFEAKKSFIIDKTKNLHEILKDLFVNYNKKYNNSTSTRKSIEIIQKYILEEIQSIYKEQGINISNKHIEIIIKQMTSKVIIKNAGNSPFIVGEICNINSIDNLNKNYEHKIIYEPILLGITKSSLYTQSFISQITFQESIKSLIKAAIENKIDWLYGLKENLILGNLIPIGTGFK.

Zn(2+)-binding residues include cysteine 219, cysteine 291, cysteine 298, and cysteine 301.

It belongs to the RNA polymerase beta' chain family. RpoC2 subfamily. As to quaternary structure, in plastids the minimal PEP RNA polymerase catalytic core is composed of four subunits: alpha, beta, beta', and beta''. When a (nuclear-encoded) sigma factor is associated with the core the holoenzyme is formed, which can initiate transcription. The cofactor is Zn(2+).

The protein resides in the plastid. The enzyme catalyses RNA(n) + a ribonucleoside 5'-triphosphate = RNA(n+1) + diphosphate. Its function is as follows. DNA-dependent RNA polymerase catalyzes the transcription of DNA into RNA using the four ribonucleoside triphosphates as substrates. The chain is DNA-directed RNA polymerase subunit beta'' (rpoC2) from Euglena longa (Euglenophycean alga).